The primary structure comprises 321 residues: MTKYALVGDVGGTNARLALCDIASGEISQAKTYSGLDYPSLEAVIRVYLEEHKVEVKDGCIAIACPITGDWVAMTNHTWAFSIAEMKKNLGFSHLEIINDFTAVSMAIPMLKKEHLIQFGGAEPVEGKPIAVYGAGTGLGVAHLVHVDKRWVSLPGEGGHVDFAPNSEEEAIILEILRAEIGHVSAERVLSGPGLVNLYRAIVKADNRLPENLKPKDITERALADSCTDCRRALSLFCVIMGRFGGNLALNLGTFGGVFIAGGIVPRFLEFFKASGFRAAFEDKGRFKEYVHDIPVYLIVHDYPGLLGSGAHLRQTLGHIL.

8–13 (GDVGGT) provides a ligand contact to ATP.

This sequence belongs to the bacterial glucokinase family.

The protein localises to the cytoplasm. It carries out the reaction D-glucose + ATP = D-glucose 6-phosphate + ADP + H(+). The chain is Glucokinase from Shigella flexneri serotype 5b (strain 8401).